The chain runs to 548 residues: 5-epi-aristolochene synthase (548 aa).

Residues Arg-264, Asp-301, Asp-305, Arg-441, and Asp-444 each contribute to the (2E,6E)-farnesyl diphosphate site. Residues Asp-301 and Asp-305 each contribute to the Mg(2+) site. A DDXXD motif motif is present at residues 301-305 (DDTFD). Mg(2+) is bound by residues Asp-444, Asp-445, Thr-448, and Glu-452.

Belongs to the terpene synthase family. In terms of assembly, monomer. The cofactor is Mg(2+). Post-translationally, self-alkylated at Tyr-520 in the presence of (2Z,6E)-farnesyl diphosphate ((Z,E)-FPP). Self-alkylated at Asp-444 at warm temperature (42 degrees Celsius) in the presence of (2E,6E)-farnesyl diphosphate ((E,E)-FPP).

The protein resides in the cytoplasm. The catalysed reaction is (2E,6E)-farnesyl diphosphate = (+)-5-epi-aristolochene + diphosphate. The enzyme catalyses (2Z,6E)-farnesyl diphosphate = (+)-2-epi-prezizaene + diphosphate. It carries out the reaction (2Z,6E)-farnesyl diphosphate = (-)-alpha-cedrene + diphosphate. It catalyses the reaction (2Z,6E)-farnesyl diphosphate = (-)-beta-curcumene + diphosphate. It participates in secondary metabolite biosynthesis; terpenoid biosynthesis. With respect to regulation, inhibited activity toward farnesyl diphosphate (FPP) by anilinogeranyl diphosphate (AGPP); AGPP undergoes a cyclization event leading to the formation of a novel macrocyclic paracyclophane alkaloid. Repressed by sesquilavandulyl diphosphate (SPP) via the induction of self-alkyation. Its function is as follows. Catalyzes the cyclization of trans,trans-farnesyl diphosphate (FPP) to the bicyclic intermediate 5-epi-aristolochene, initial step in the conversion of FPP to the sesquiterpenoid antifungal phytoalexin capsidiol. Produces germacrene A as an enzyme-bound intermediate that is not released by the enzyme, but is further cyclized to produce the bicyclic 5-epi-aristolochene. Mediates, at low levels, the formation of 4-epi-eremophilene and premnaspirodiene from trans,trans-farnesyl diphosphate. Also mediates the conversion of cis,trans-farnesyl diphosphate to cisoid minor products such as (+)-2-epi-prezizaene, (-)-alpha-cedrene and, to a lesser extent, (-)-beta-curcumene; also produces, at low levels, alpha-acoradiene and 4-epi-alpha-acoradiene, but barely nerolidol, alpha-bisabolol, epi-alpha-bisabolol and cis-farnesol. This is 5-epi-aristolochene synthase (EAS3) from Nicotiana tabacum (Common tobacco).